Reading from the N-terminus, the 135-residue chain is Large ribosomal subunit protein uL22c (135 aa).

Belongs to the universal ribosomal protein uL22 family. As to quaternary structure, part of the 50S ribosomal subunit.

The protein resides in the plastid. Functionally, this protein binds specifically to 23S rRNA. The globular domain of the protein is located near the polypeptide exit tunnel on the outside of the subunit, while an extended beta-hairpin is found that lines the wall of the exit tunnel in the center of the 70S ribosome. This chain is Large ribosomal subunit protein uL22c (rpl22), found in Cuscuta reflexa (Southern Asian dodder).